The following is a 286-amino-acid chain: UPF0173 metal-dependent hydrolase RALTA_A1748 (286 aa).

It belongs to the UPF0173 family.

In Cupriavidus taiwanensis (strain DSM 17343 / BCRC 17206 / CCUG 44338 / CIP 107171 / LMG 19424 / R1) (Ralstonia taiwanensis (strain LMG 19424)), this protein is UPF0173 metal-dependent hydrolase RALTA_A1748.